The chain runs to 399 residues: Tyrosine--tRNA ligase 2 (399 aa).

Residues 42 to 51 (PTAPDLHLGH) carry the 'HIGH' region motif. Positions 226–230 (KMSKS) match the 'KMSKS' region motif. K229 is a binding site for ATP. Residues 336 to 396 (MPVASVLNKA…GKKAFARITL (61 aa)) enclose the S4 RNA-binding domain.

It belongs to the class-I aminoacyl-tRNA synthetase family. TyrS type 2 subfamily. As to quaternary structure, homodimer.

It localises to the cytoplasm. It catalyses the reaction tRNA(Tyr) + L-tyrosine + ATP = L-tyrosyl-tRNA(Tyr) + AMP + diphosphate + H(+). Its function is as follows. Catalyzes the attachment of tyrosine to tRNA(Tyr) in a two-step reaction: tyrosine is first activated by ATP to form Tyr-AMP and then transferred to the acceptor end of tRNA(Tyr). This chain is Tyrosine--tRNA ligase 2, found in Pseudomonas aeruginosa (strain ATCC 15692 / DSM 22644 / CIP 104116 / JCM 14847 / LMG 12228 / 1C / PRS 101 / PAO1).